A 367-amino-acid chain; its full sequence is Chorismate synthase (367 aa).

Arg-48 is a binding site for NADP(+). Residues Arg-125–Ser-127, Asn-243–Ala-244, Gly-283, Lys-298–Ser-302, and Arg-324 each bind FMN.

This sequence belongs to the chorismate synthase family. In terms of assembly, homotetramer. FMNH2 is required as a cofactor.

The enzyme catalyses 5-O-(1-carboxyvinyl)-3-phosphoshikimate = chorismate + phosphate. It functions in the pathway metabolic intermediate biosynthesis; chorismate biosynthesis; chorismate from D-erythrose 4-phosphate and phosphoenolpyruvate: step 7/7. Catalyzes the anti-1,4-elimination of the C-3 phosphate and the C-6 proR hydrogen from 5-enolpyruvylshikimate-3-phosphate (EPSP) to yield chorismate, which is the branch point compound that serves as the starting substrate for the three terminal pathways of aromatic amino acid biosynthesis. This reaction introduces a second double bond into the aromatic ring system. The protein is Chorismate synthase of Psychrobacter arcticus (strain DSM 17307 / VKM B-2377 / 273-4).